A 365-amino-acid chain; its full sequence is UDP-N-acetylglucosamine--N-acetylmuramyl-(pentapeptide) pyrophosphoryl-undecaprenol N-acetylglucosamine transferase (365 aa).

Residues 10 to 12 (TGG), asparagine 128, arginine 170, serine 199, isoleucine 250, and glutamine 295 contribute to the UDP-N-acetyl-alpha-D-glucosamine site.

The protein belongs to the glycosyltransferase 28 family. MurG subfamily.

The protein resides in the cell inner membrane. The enzyme catalyses di-trans,octa-cis-undecaprenyl diphospho-N-acetyl-alpha-D-muramoyl-L-alanyl-D-glutamyl-meso-2,6-diaminopimeloyl-D-alanyl-D-alanine + UDP-N-acetyl-alpha-D-glucosamine = di-trans,octa-cis-undecaprenyl diphospho-[N-acetyl-alpha-D-glucosaminyl-(1-&gt;4)]-N-acetyl-alpha-D-muramoyl-L-alanyl-D-glutamyl-meso-2,6-diaminopimeloyl-D-alanyl-D-alanine + UDP + H(+). It functions in the pathway cell wall biogenesis; peptidoglycan biosynthesis. Functionally, cell wall formation. Catalyzes the transfer of a GlcNAc subunit on undecaprenyl-pyrophosphoryl-MurNAc-pentapeptide (lipid intermediate I) to form undecaprenyl-pyrophosphoryl-MurNAc-(pentapeptide)GlcNAc (lipid intermediate II). This chain is UDP-N-acetylglucosamine--N-acetylmuramyl-(pentapeptide) pyrophosphoryl-undecaprenol N-acetylglucosamine transferase, found in Chlorobium luteolum (strain DSM 273 / BCRC 81028 / 2530) (Pelodictyon luteolum).